The sequence spans 452 residues: Neuronal acetylcholine receptor subunit alpha-5 (452 aa).

A signal peptide spans 1 to 27 (MVQLLAGRWRPTGARRGTRGGLPELSS). Topologically, residues 28–239 (AAKHEDSLFR…VIKRLPLFYT (212 aa)) are extracellular. N-linked (GlcNAc...) asparagine glycans are attached at residues Asn140, Asn168, and Asn214. Cys155 and Cys169 are joined by a disulfide. A disulfide bond links Cys219 and Cys220. 3 helical membrane-spanning segments follow: residues 240–260 (LFLIIPCIGLSFLTVVVFYLP), 269–289 (LCTSVLVSLTVFLLVIEEIIP), and 302–322 (LVFTMIFVTLSIMVTVFAINI). Topologically, residues 323 to 414 (HHRSSSTHNA…KFIAQVLDRM (92 aa)) are cytoplasmic. A helical membrane pass occupies residues 415–435 (FLWTFLLVSIIGTLGLFVPVI). Residues 436–452 (YKWANIIVPVHIGNTIK) lie on the Extracellular side of the membrane.

Belongs to the ligand-gated ion channel (TC 1.A.9) family. Acetylcholine receptor (TC 1.A.9.1) subfamily. Alpha-5/CHRNA5 sub-subfamily. Neuronal AChR that forms heteropentamers composed of two different type of subunits: alpha and non-alpha (beta). CHRNA5/alpha-5 subunit is only able to form functional nAChRs when co-assembled with another alpha subunit, can be combined to CHRNA4/alpha-4 or CHRNA3/alpha-3 and CHRNB4/beta-4 or CHRNB2/beta-2 to give rise to functional receptors. Interacts with LYPD6.

The protein resides in the synaptic cell membrane. The protein localises to the cell membrane. The catalysed reaction is Ca(2+)(in) = Ca(2+)(out). It catalyses the reaction K(+)(in) = K(+)(out). The enzyme catalyses Na(+)(in) = Na(+)(out). With respect to regulation, activated by a myriad of ligands such as acetylcholine, cytisine, nicotine, choline and epibatidine. Its function is as follows. Component of neuronal acetylcholine receptors (nAChRs) that function as pentameric, ligand-gated cation channels with high calcium permeability among other activities. nAChRs are excitatory neurotrasnmitter receptors formed by a collection of nAChR subunits known to mediate synaptic transmission in the nervous system and the neuromuscular junction. Each nAchR subunit confers differential attributes to channel properties, including activation, deactivation and desensitization kinetics, pH sensitivity, cation permeability, and binding to allosteric modulators. Has an accessory rather than functional role and is only able to form functional nAChRs when co-assembled with another beta subunit. Participates in pentameric assemblies along with CHRNA3, CHRNA4, CHRNB2 and CHRNB4. Increases receptor sensitivity to acetylcholine and nicotine when associated with CHRNA4 and CHRNB2. Plays a role in nicotine addiction. The chain is Neuronal acetylcholine receptor subunit alpha-5 (Chrna5) from Rattus norvegicus (Rat).